The primary structure comprises 341 residues: Outer membrane protein assembly factor BamD (341 aa).

The N-terminal stretch at 1–17 is a signal peptide; it reads MQVKHLLLIAILALTAA. Cys18 carries the N-palmitoyl cysteine lipid modification. A lipid anchor (S-diacylglycerol cysteine) is attached at Cys18. Residues 289–316 show a composition bias toward basic and acidic residues; the sequence is DVIKQYEDAEREIPAELKPENQDHSADD. The segment at 289 to 330 is disordered; that stretch reads DVIKQYEDAEREIPAELKPENQDHSADDEKPESDDDEDSGRS. Over residues 317 to 326 the composition is skewed to acidic residues; that stretch reads EKPESDDDED.

It belongs to the BamD family. As to quaternary structure, part of the Bam complex.

The protein resides in the cell outer membrane. Part of the outer membrane protein assembly complex, which is involved in assembly and insertion of beta-barrel proteins into the outer membrane. This is Outer membrane protein assembly factor BamD from Pseudomonas aeruginosa (strain ATCC 15692 / DSM 22644 / CIP 104116 / JCM 14847 / LMG 12228 / 1C / PRS 101 / PAO1).